Consider the following 254-residue polypeptide: 5'/3'-nucleotidase SurE (254 aa).

The a divalent metal cation site is built by D9, D10, S40, and N93.

The protein belongs to the SurE nucleotidase family. A divalent metal cation serves as cofactor.

It localises to the cytoplasm. It carries out the reaction a ribonucleoside 5'-phosphate + H2O = a ribonucleoside + phosphate. The catalysed reaction is a ribonucleoside 3'-phosphate + H2O = a ribonucleoside + phosphate. It catalyses the reaction [phosphate](n) + H2O = [phosphate](n-1) + phosphate + H(+). Functionally, nucleotidase with a broad substrate specificity as it can dephosphorylate various ribo- and deoxyribonucleoside 5'-monophosphates and ribonucleoside 3'-monophosphates with highest affinity to 3'-AMP. Also hydrolyzes polyphosphate (exopolyphosphatase activity) with the preference for short-chain-length substrates (P20-25). Might be involved in the regulation of dNTP and NTP pools, and in the turnover of 3'-mononucleotides produced by numerous intracellular RNases (T1, T2, and F) during the degradation of various RNAs. In Yersinia pestis bv. Antiqua (strain Antiqua), this protein is 5'/3'-nucleotidase SurE.